The sequence spans 172 residues: Large ribosomal subunit protein uL10 (172 aa).

The protein belongs to the universal ribosomal protein uL10 family. Part of the ribosomal stalk of the 50S ribosomal subunit. The N-terminus interacts with L11 and the large rRNA to form the base of the stalk. The C-terminus forms an elongated spine to which L12 dimers bind in a sequential fashion forming a multimeric L10(L12)X complex.

Its function is as follows. Forms part of the ribosomal stalk, playing a central role in the interaction of the ribosome with GTP-bound translation factors. The polypeptide is Large ribosomal subunit protein uL10 (Ruegeria pomeroyi (strain ATCC 700808 / DSM 15171 / DSS-3) (Silicibacter pomeroyi)).